The chain runs to 339 residues: 7,8-didemethyl-8-hydroxy-5-deazariboflavin synthase (339 aa).

The Radical SAM core domain occupies 13–258 (ITYSKNIFIP…RDTDVSIQVP (246 aa)). The [4Fe-4S] cluster site is built by cysteine 27, cysteine 31, and cysteine 34.

Belongs to the radical SAM superfamily. CofG family. Consists of two subunits, CofG and CofH. The cofactor is [4Fe-4S] cluster.

The enzyme catalyses 5-amino-5-(4-hydroxybenzyl)-6-(D-ribitylimino)-5,6-dihydrouracil + S-adenosyl-L-methionine = 7,8-didemethyl-8-hydroxy-5-deazariboflavin + 5'-deoxyadenosine + L-methionine + NH4(+) + H(+). It functions in the pathway cofactor biosynthesis; coenzyme F0 biosynthesis. Functionally, catalyzes the radical-mediated synthesis of 7,8-didemethyl-8-hydroxy-5-deazariboflavin from 5-amino-5-(4-hydroxybenzyl)-6-(D-ribitylimino)-5,6-dihydrouracil. The protein is 7,8-didemethyl-8-hydroxy-5-deazariboflavin synthase of Methanobrevibacter smithii (strain ATCC 35061 / DSM 861 / OCM 144 / PS).